The following is a 299-amino-acid chain: NAD-dependent protein deacetylase 1 (299 aa).

In terms of domain architecture, Deacetylase sirtuin-type spans 15–292 (LPPGTTDLAP…TTVADRLGLR (278 aa)). Residues 39 to 59 (GAGI…GSLS) and 117 to 120 (QNVD) each bind NAD(+). H135 (proton acceptor) is an active-site residue. Residues C143, C146, C194, and C197 each contribute to the Zn(2+) site. NAD(+) is bound by residues 234-236 (GSS) and L278.

Belongs to the sirtuin family. Class II subfamily. Zn(2+) serves as cofactor.

The protein localises to the cytoplasm. The enzyme catalyses N(6)-acetyl-L-lysyl-[protein] + NAD(+) + H2O = 2''-O-acetyl-ADP-D-ribose + nicotinamide + L-lysyl-[protein]. NAD-dependent protein deacetylase which modulates the activities of several enzymes which are inactive in their acetylated form. This Streptomyces coelicolor (strain ATCC BAA-471 / A3(2) / M145) protein is NAD-dependent protein deacetylase 1.